Reading from the N-terminus, the 413-residue chain is ATP-dependent (S)-NAD(P)H-hydrate dehydratase (413 aa).

One can recognise a YjeF C-terminal domain in the interval 98 to 402 (NLNHFLSYVP…KSVPNALVWG (305 aa)). (6S)-NADPHX contacts are provided by residues Gly-199 and 252–258 (NFVEYRA). ATP contacts are provided by residues 292 to 296 (KGQED) and 311 to 320 (GMPRRCGGQG). Asp-321 provides a ligand contact to (6S)-NADPHX.

This sequence belongs to the NnrD/CARKD family. The cofactor is Mg(2+).

The catalysed reaction is (6S)-NADHX + ATP = ADP + phosphate + NADH + H(+). It catalyses the reaction (6S)-NADPHX + ATP = ADP + phosphate + NADPH + H(+). Catalyzes the dehydration of the S-form of NAD(P)HX at the expense of ATP, which is converted to ADP. Together with NAD(P)HX epimerase, which catalyzes the epimerization of the S- and R-forms, the enzyme allows the repair of both epimers of NAD(P)HX, a damaged form of NAD(P)H that is a result of enzymatic or heat-dependent hydration. The chain is ATP-dependent (S)-NAD(P)H-hydrate dehydratase from Heterostelium pallidum (strain ATCC 26659 / Pp 5 / PN500) (Cellular slime mold).